The following is a 416-amino-acid chain: Tryptophan synthase beta chain (416 aa).

Lys109 is modified (N6-(pyridoxal phosphate)lysine).

It belongs to the TrpB family. Tetramer of two alpha and two beta chains. The cofactor is pyridoxal 5'-phosphate.

It carries out the reaction (1S,2R)-1-C-(indol-3-yl)glycerol 3-phosphate + L-serine = D-glyceraldehyde 3-phosphate + L-tryptophan + H2O. Its pathway is amino-acid biosynthesis; L-tryptophan biosynthesis; L-tryptophan from chorismate: step 5/5. Functionally, the beta subunit is responsible for the synthesis of L-tryptophan from indole and L-serine. This Prochlorococcus marinus (strain SARG / CCMP1375 / SS120) protein is Tryptophan synthase beta chain.